A 525-amino-acid chain; its full sequence is 2,3-bisphosphoglycerate-independent phosphoglycerate mutase (525 aa).

Mn(2+)-binding residues include Asp15 and Ser65. Ser65 functions as the Phosphoserine intermediate in the catalytic mechanism. Residues His126, 156 to 157 (RD), Arg188, Arg194, 258 to 261 (RPDR), and Lys331 each bind substrate. Mn(2+) contacts are provided by Asp398, His402, Asp439, His440, and His457.

Belongs to the BPG-independent phosphoglycerate mutase family. In terms of assembly, monomer. Mn(2+) serves as cofactor.

The catalysed reaction is (2R)-2-phosphoglycerate = (2R)-3-phosphoglycerate. Its pathway is carbohydrate degradation; glycolysis; pyruvate from D-glyceraldehyde 3-phosphate: step 3/5. Its function is as follows. Catalyzes the interconversion of 2-phosphoglycerate and 3-phosphoglycerate. The protein is 2,3-bisphosphoglycerate-independent phosphoglycerate mutase of Picosynechococcus sp. (strain ATCC 27264 / PCC 7002 / PR-6) (Agmenellum quadruplicatum).